The chain runs to 560 residues: Membrane protein insertase YidC (560 aa).

Helical transmembrane passes span 5–25, 334–354, 357–377, 431–451, 476–496, and 522–542; these read IINL…WQYF, AIDF…MNFF, YVGN…LLMF, LPIL…YVTI, LFGL…WPIL, and FMPL…LIYW.

Belongs to the OXA1/ALB3/YidC family. Type 1 subfamily. In terms of assembly, interacts with the Sec translocase complex via SecD. Specifically interacts with transmembrane segments of nascent integral membrane proteins during membrane integration.

The protein resides in the cell inner membrane. In terms of biological role, required for the insertion and/or proper folding and/or complex formation of integral membrane proteins into the membrane. Involved in integration of membrane proteins that insert both dependently and independently of the Sec translocase complex, as well as at least some lipoproteins. Aids folding of multispanning membrane proteins. This Rickettsia conorii (strain ATCC VR-613 / Malish 7) protein is Membrane protein insertase YidC.